Reading from the N-terminus, the 575-residue chain is MNVFDGSDEEDNNPFSGTTHLYASGIAAVTDGPDDYDFTEPSINGSSDENAQSNAVAEPIEETDEPAEEIDDDTLQTWRFASAELSRSSAFETSYTNLLGQGKNPEVIRIVDAGQYRDIYGKYAIGYKIEFGGIVVTRRYSEFDSLRQSLCRLLPTIIIPPIPSKHPIIKYLFNPLHAKKDIKIIERRQRLLSRFLNNCHKVREIRNHIVFQKFLNPEYFWKEVLNTPPISILPMNNLLAPPLNPTKPSPIHLLLPTPTVLTMRKHEQLIGRNDVMEIKFADYDSDLIRYKAILQPLNKTVRSIRSNIQTYSAVLSELGAYFNAFSLENSVFQVSALFEQMNRLSMGIEKTGQAIDVNYVSAEIFSEAIMISLEEGSKEMLQFIHEAQRVLHFRNFKQEQFYTIETTIKKRKDRIRELKEADLQAVRLGEALKLNAEESPTVAQVMDSMTRKSANKNHTDKQIMGLFRSSASPNNKSGSDSISSEVEPHLLTKDERVVQVNKLEKELEKLNECFKLIEKDLQQVNESMDNSLNNLEKYFHEKWFLIFRELAHNITSWLKDCSESWKNAKQSIDSI.

The tract at residues 30 to 66 is disordered; the sequence is TDGPDDYDFTEPSINGSSDENAQSNAVAEPIEETDEP. A compositionally biased stretch (polar residues) spans 41–55; it reads PSINGSSDENAQSNA. The PX domain occupies 101–221; it reads QGKNPEVIRI…QKFLNPEYFW (121 aa). Positions 139, 141, 165, and 188 each coordinate a 1,2-diacyl-sn-glycero-3-phospho-(1D-myo-inositol-3-phosphate). Residues 467 to 486 form a disordered region; the sequence is FRSSASPNNKSGSDSISSEV. Residues 469-484 show a composition bias toward polar residues; it reads SSASPNNKSGSDSISS.

This sequence belongs to the sorting nexin family.

Its subcellular location is the endosome membrane. It is found in the endomembrane system. May be required for cytoplasm to vacuole transport (Cvt) and pexophagy. The protein is Sorting nexin-41 (SNX41) of Kluyveromyces lactis (strain ATCC 8585 / CBS 2359 / DSM 70799 / NBRC 1267 / NRRL Y-1140 / WM37) (Yeast).